Consider the following 407-residue polypeptide: Peptidase T (407 aa).

Histidine 82 lines the Zn(2+) pocket. Residue aspartate 84 is part of the active site. Position 143 (aspartate 143) interacts with Zn(2+). Residue glutamate 177 is the Proton acceptor of the active site. Residues glutamate 178, aspartate 200, and histidine 382 each coordinate Zn(2+).

This sequence belongs to the peptidase M20B family. Requires Zn(2+) as cofactor.

Its subcellular location is the cytoplasm. The enzyme catalyses Release of the N-terminal residue from a tripeptide.. In terms of biological role, cleaves the N-terminal amino acid of tripeptides. In Streptococcus pyogenes serotype M49 (strain NZ131), this protein is Peptidase T.